The chain runs to 264 residues: ATP synthase subunit b 1 (264 aa).

The chain crosses the membrane as a helical span at residues 2-22 (LFDWFTFWAQLLNFLILVWLL). Residues 240-264 (ASSALLDGPDDEMNEEEGHAGKDAD) form a disordered region. Residues 255–264 (EEGHAGKDAD) are compositionally biased toward basic and acidic residues.

This sequence belongs to the ATPase B chain family. In terms of assembly, F-type ATPases have 2 components, F(1) - the catalytic core - and F(0) - the membrane proton channel. F(1) has five subunits: alpha(3), beta(3), gamma(1), delta(1), epsilon(1). F(0) has four main subunits: a(1), b(2) and c(10-14). The alpha and beta chains form an alternating ring which encloses part of the gamma chain. F(1) is attached to F(0) by a central stalk formed by the gamma and epsilon chains, while a peripheral stalk is formed by the delta and b chains.

It is found in the cell inner membrane. Its function is as follows. F(1)F(0) ATP synthase produces ATP from ADP in the presence of a proton or sodium gradient. F-type ATPases consist of two structural domains, F(1) containing the extramembraneous catalytic core and F(0) containing the membrane proton channel, linked together by a central stalk and a peripheral stalk. During catalysis, ATP synthesis in the catalytic domain of F(1) is coupled via a rotary mechanism of the central stalk subunits to proton translocation. Functionally, component of the F(0) channel, it forms part of the peripheral stalk, linking F(1) to F(0). This is ATP synthase subunit b 1 from Chlorobium luteolum (strain DSM 273 / BCRC 81028 / 2530) (Pelodictyon luteolum).